A 465-amino-acid polypeptide reads, in one-letter code: 3-isopropylmalate dehydratase large subunit (465 aa).

[4Fe-4S] cluster is bound by residues Cys-346, Cys-406, and Cys-409.

It belongs to the aconitase/IPM isomerase family. LeuC type 1 subfamily. Heterodimer of LeuC and LeuD. It depends on [4Fe-4S] cluster as a cofactor.

It catalyses the reaction (2R,3S)-3-isopropylmalate = (2S)-2-isopropylmalate. It participates in amino-acid biosynthesis; L-leucine biosynthesis; L-leucine from 3-methyl-2-oxobutanoate: step 2/4. In terms of biological role, catalyzes the isomerization between 2-isopropylmalate and 3-isopropylmalate, via the formation of 2-isopropylmaleate. This Leptospira interrogans serogroup Icterohaemorrhagiae serovar copenhageni (strain Fiocruz L1-130) protein is 3-isopropylmalate dehydratase large subunit.